The primary structure comprises 79 residues: Ponericin-W-like 32.1 (79 aa).

Residues 1–23 (MKCKKQLLVIFFAYFLVVNESEA) form the signal peptide. A propeptide spanning residues 49 to 79 (RALMKRDLEDIMDPYQKNLKLDRYLRRLAMD) is cleaved from the precursor.

This sequence belongs to the non-disulfide-bridged peptide (NDBP) superfamily. Medium-length antimicrobial peptide (group 3) family. Ponericin-W subfamily. In terms of tissue distribution, expressed by the venom gland.

The protein localises to the secreted. It is found in the target cell membrane. Functionally, antimicrobial peptide with potent activity against a range of Gram-positive and Gram-negative bacteria. Has high hemolytic activity against erythrocytes. May act by disrupting the integrity of the bacterial cell membrane. The chain is Ponericin-W-like 32.1 from Lychas mucronatus (Chinese swimming scorpion).